The primary structure comprises 290 residues: 33 kDa chaperonin (290 aa).

2 disulfide bridges follow: Cys-235/Cys-237 and Cys-268/Cys-271.

It belongs to the HSP33 family. Post-translationally, under oxidizing conditions two disulfide bonds are formed involving the reactive cysteines. Under reducing conditions zinc is bound to the reactive cysteines and the protein is inactive.

It localises to the cytoplasm. In terms of biological role, redox regulated molecular chaperone. Protects both thermally unfolding and oxidatively damaged proteins from irreversible aggregation. Plays an important role in the bacterial defense system toward oxidative stress. This Streptococcus pyogenes serotype M49 (strain NZ131) protein is 33 kDa chaperonin.